The primary structure comprises 538 residues: Phosphoenolpyruvate carboxykinase (ATP) (538 aa).

Substrate contacts are provided by arginine 64, tyrosine 205, and lysine 211. ATP-binding positions include lysine 211, histidine 230, and 246-254 (GLSGTGKTT). 2 residues coordinate Mn(2+): lysine 211 and histidine 230. A Mn(2+)-binding site is contributed by aspartate 267. ATP contacts are provided by residues glutamate 295, arginine 331, 447–448 (RI), and threonine 453. Arginine 331 is a binding site for substrate.

Belongs to the phosphoenolpyruvate carboxykinase (ATP) family. In terms of assembly, monomer. Requires Mn(2+) as cofactor.

The protein localises to the cytoplasm. It carries out the reaction oxaloacetate + ATP = phosphoenolpyruvate + ADP + CO2. Its pathway is carbohydrate biosynthesis; gluconeogenesis. Functionally, involved in the gluconeogenesis. Catalyzes the conversion of oxaloacetate (OAA) to phosphoenolpyruvate (PEP) through direct phosphoryl transfer between the nucleoside triphosphate and OAA. The polypeptide is Phosphoenolpyruvate carboxykinase (ATP) (Haemophilus influenzae (strain PittEE)).